The primary structure comprises 406 residues: COP9 signalosome complex subunit 4 (406 aa).

Position 2 is an N-acetylalanine (A2). N6-acetyllysine is present on K25. Residues 197 to 366 (YRRKFIEAAQ…GIVHFETREA (170 aa)) enclose the PCI domain.

This sequence belongs to the CSN4 family. In terms of assembly, component of the CSN complex, composed of COPS1/GPS1, COPS2, COPS3, COPS4, COPS5, COPS6, COPS7 (COPS7A or COPS7B), COPS8 and COPS9 isoform 1. In the complex, it probably interacts directly with COPS1, COPS2, COPS3, COPS5, COPS6, COPS7 (COPS7A or COPS7B) and COPS8. Interacts with TOR1A; the interaction is direct and associates TOR1A and SNAPIN with the CSN complex. Interacts with STON2; controls STON2 neddylation levels. Interacts with ERCC6.

The protein resides in the cytoplasm. It localises to the nucleus. Its subcellular location is the cytoplasmic vesicle. The protein localises to the secretory vesicle. It is found in the synaptic vesicle. Its function is as follows. Component of the COP9 signalosome complex (CSN), a complex involved in various cellular and developmental processes. The CSN complex is an essential regulator of the ubiquitin (Ubl) conjugation pathway by mediating the deneddylation of the cullin subunits of SCF-type E3 ligase complexes, leading to decrease the Ubl ligase activity of SCF-type complexes such as SCF, CSA or DDB2. Also involved in the deneddylation of non-cullin subunits such as STON2. The complex is also involved in phosphorylation of p53/TP53, c-jun/JUN, IkappaBalpha/NFKBIA, ITPK1, IRF8/ICSBP and SNAPIN, possibly via its association with CK2 and PKD kinases. CSN-dependent phosphorylation of TP53 and JUN promotes and protects degradation by the Ubl system, respectively. In Homo sapiens (Human), this protein is COP9 signalosome complex subunit 4 (COPS4).